The primary structure comprises 319 residues: MVVHLISLLTQTLALIILSLPSIINTSQLDYDTLVFKQCDPLDANILQKATTKSPNYSNQNLFLRAQALSSFLRKLESESSRSKFLKTLVGNEKHAVSGWFQCREDYPSEICHKCVGDLREISSRSCGNATSARIHLRGCHLIYKFERIDTPGAQVNNHHKYKLFETPEHGLIHKICDGATAETFPGFEEMRTEALTAAETGVVDGHGFYEDSYKLLHVVAQCDGHVEACDCGECISSAAAAAAEECRWSIAGQIYLEGCHVGYTYHPHELPNDSYHEEGSKVNTGKSLAIVVGGVAALVFVAIFFMFLKSLRKKGDDC.

Positions 1–26 (MVVHLISLLTQTLALIILSLPSIINT) are cleaved as a signal peptide. The Extracellular portion of the chain corresponds to 27–288 (SQLDYDTLVF…EGSKVNTGKS (262 aa)). Intrachain disulfides connect cysteine 39–cysteine 127, cysteine 103–cysteine 112, cysteine 115–cysteine 140, cysteine 177–cysteine 247, cysteine 223–cysteine 232, and cysteine 235–cysteine 260. Gnk2-homologous domains lie at 45–149 (NILQ…FERI) and 170–269 (HGLI…YHPH). Residues 289–309 (LAIVVGGVAALVFVAIFFMFL) traverse the membrane as a helical segment. Residues 289–309 (LAIVVGGVAALVFVAIFFMFL) form a necessary and sufficient for plasmodesmal targeting region. At 310 to 319 (KSLRKKGDDC) the chain is on the cytoplasmic side.

The protein belongs to the cysteine-rich repeat secretory protein family. Plasmodesmata-located proteins (PDLD) subfamily. (Microbial infection) Interacts with Grapevine fanleaf virus (GFLV) 2B-MP. In terms of tissue distribution, highly expressed in seeds and roots.

It localises to the cell membrane. It is found in the cell junction. The protein localises to the plasmodesma. Modulates cell-to-cell trafficking. The polypeptide is Plasmodesmata-located protein 4 (Arabidopsis thaliana (Mouse-ear cress)).